A 20-amino-acid polypeptide reads, in one-letter code: Brevinin-1SPd (20 aa).

A disulfide bridge links cysteine 14 with cysteine 20.

In terms of tissue distribution, expressed by the skin glands.

Its subcellular location is the secreted. Antimicrobial peptide with activity against Gram-negative and Gram-positive bacteria (MIC=13 uM against E.coli, MIC=3 uM against S.aureus) and fungi (MIC=3 uM against C.albicans). Shows hemolytic activity on human erythrocytes (HC(50)=8 uM). The sequence is that of Brevinin-1SPd from Lithobates septentrionalis (Mink frog).